The primary structure comprises 1170 residues: Thrombospondin-1 (1170 aa).

The N-terminal stretch at 1 to 18 (MGLAWGLGVLFLMHVCGT) is a signal peptide. Residues 47–95 (RLVKGPDPSSPAFRIEDANLIPPVPDDKFQDLVDAVRAEKGFLLLASLR) form a heparin-binding region. A Laminin G-like domain is found at 65 to 270 (NLIPPVPDDK…HKTKDLQAIC (206 aa)). Cysteines 171 and 232 form a disulfide. Residues Asn248 and Asn360 are each glycosylated (N-linked (GlcNAc...) asparagine). Residues 316-373 (PLCYHNGVQYRNNEEWTVDSCTECHCQNSVTICKKVSCPIMPCSNATVPDGECCPRCW) enclose the VWFC domain. TSP type-1 domains follow at residues 379 to 429 (DDGW…QECD), 435 to 490 (DGGW…DACP), and 492 to 547 (NGGW…QDCP). Trp385 carries C-linked (Man) tryptophan glycosylation. Disulfide bonds link Cys391–Cys423, Cys395–Cys428, and Cys406–Cys413. An O-linked (Fuc...) serine glycan is attached at Ser394. Trp438 and Trp441 each carry a C-linked (Man) tryptophan glycan. 3 cysteine pairs are disulfide-bonded: Cys447–Cys484, Cys451–Cys489, and Cys462–Cys474. O-linked (Fuc...) threonine glycosylation occurs at Thr450. A C-linked (Man) tryptophan glycan is attached at Trp498. 21 disulfides stabilise this stretch: Cys504–Cys541, Cys508–Cys546, Cys519–Cys531, Cys551–Cys562, Cys556–Cys572, Cys575–Cys586, Cys592–Cys608, Cys599–Cys617, Cys620–Cys644, Cys650–Cys663, Cys657–Cys676, Cys678–Cys689, Cys705–Cys713, Cys718–Cys738, Cys754–Cys774, Cys777–Cys797, Cys813–Cys833, Cys836–Cys856, Cys874–Cys894, Cys910–Cys930, and Cys946–Cys1167. The O-linked (Fuc...) threonine glycan is linked to Thr507. Positions 531 to 1152 (CVGDVTENQI…YAGGRLGLFV (622 aa)) are involved in retention in extracellular matrix (ECM); involved in trimer formation. One can recognise an EGF-like 1 domain in the interval 547-587 (PIDGCLSNPCFAGVKCTSYPDGSWKCGACPPGYSGNGIQCT). Ser553 carries an O-linked (Xyl) serine glycan. In terms of domain architecture, EGF-like 2 spans 646–690 (PRNPCTDGTHDCNKNAKCNYLGHYSDPMYRCECKPGYAGNGIICG). TSP type-3 repeat units lie at residues 691 to 726 (EDTDLDGWPNENLVCVANATYHCKKDNCPNLPNSGQ), 727 to 762 (EDYDKDGIGDACDDDDDNDKIPDDRDNCPFHYNPAQ), 763 to 785 (YDYDRDDVGDRCDNCPYNHNPDQ), 786 to 821 (ADTDNNGEGDACAADIDGDGILNERDNCQYVYNVDQ), 822 to 844 (RDTDMDGVGDQCDNCPLEHNPDQ), 845 to 882 (LDSDSDRIGDTCDNNQDIDEDGHQNNLDNCPYVPNANQ), 883 to 918 (ADHDKDGKGDACDHDDDNDGIPDDKDNCRLVPNPDQ), and 919 to 954 (KDSDGDGRGDACKDDFDHDSVPDIDDICPENVDISE). N-linked (GlcNAc...) asparagine glycosylation is present at Asn708. Residues 839–934 (EHNPDQLDSD…GRGDACKDDF (96 aa)) form a disordered region. 3 stretches are compositionally biased toward basic and acidic residues: residues 840-854 (HNPDQLDSDSDRIGD), 883-894 (ADHDKDGKGDAC), and 917-934 (DQKDSDGDGRGDACKDDF). The Cell attachment site signature appears at 926–928 (RGD). The TSP C-terminal domain maps to 958 to 1170 (RRFQMIPLDP…SDLKYECRDP (213 aa)). Asn1067 is a glycosylation site (N-linked (GlcNAc...) asparagine).

It belongs to the thrombospondin family. In terms of assembly, homotrimer; disulfide-linked. Can bind to fibrinogen, fibronectin, laminin, type V collagen and integrins alpha-V/beta-1, alpha-V/beta-3 and alpha-IIb/beta-3. Binds heparin. Interacts (via the C-terminal domain) with CD47. Interacts (via the TSP type I repeats) with CD36; the interaction conveys an antiangiogenic effect. Interacts (via the TSP type I repeats) with HRG; the interaction blocks the antiangiogenic effect of THBS1 with CD36. Interacts with ATF6 (via lumenal domain). Interacts with FN1; this interaction is enhanced by TNFAIP6, which may act as a bridging molecule between FN1 and THBS1. Interacts with SIRPA; the interaction stimulates phosphorylation of SIRPA. Expressed by platelets (at protein level). Expressed by monocyte-derived immature and mature dendritic cells (at protein level).

It is found in the secreted. The protein localises to the cell surface. Its subcellular location is the extracellular space. The protein resides in the extracellular matrix. It localises to the endoplasmic reticulum. It is found in the sarcoplasmic reticulum. Adhesive glycoprotein that mediates cell-to-cell and cell-to-matrix interactions. Multifunctional, involved in inflammation, angiogenesis, wound healing, reactive oxygen species (ROS) signaling, nitrous oxide (NO) signaling, apoptosis, senescence, aging, cellular self-renewal, stemness, and cardiovascular and metabolic homeostasis. Negatively modulates dendritic cell activation and cytokine release, as part of an autocrine feedback loop, contributing to the resolution of inflammation and immune homeostasis. Ligand for receptor CD47. Modulates nitrous oxide (NO) signaling via CD47, hence playing a role as a pressor agent, supporting blood pressure. Plays a role in endothelial cell senescence, acting via CD47, by increasing the abundance and activation of NADPH oxidase NOX1, and so generating excess ROS. Inhibits stem cell self-renewal, acting via CD47 signaling, probably by regulation of the stem cell transcription factors POU5F1/OCT4, SOX2, MYC/c-Myc and KLF4. Negatively modulates wound healing, acting via CD47. Ligand for receptor CD36. Involved in inducing apoptosis in podocytes in response to elevated free fatty acids, acting via CD36. Plays a role in suppressing angiogenesis, acting, depending on context, via CD36 or CD47. Promotes cellular senescence in a TP53-CDKN1A-RB1 signaling-dependent manner. Ligand for immunoglobulin-like cell surface receptor SIRPA. Involved in ROS signaling in non-phagocytic cells, stimulating NADPH oxidase-derived ROS production, acting via interaction with SIRPA. Plays a role in metabolic dysfunction in diet-induced obesity, perhaps acting by exacerbating adipose inflammatory activity; its effects may be mediated, at least in part, through enhanced adipocyte proliferation. Plays a role in ER stress response, via its interaction with the activating transcription factor 6 alpha (ATF6) which produces adaptive ER stress response factors. May be involved in age-related conditions, including metabolic dysregulation, during normal aging. This chain is Thrombospondin-1, found in Homo sapiens (Human).